A 587-amino-acid polypeptide reads, in one-letter code: Arginine--tRNA ligase (587 aa).

Positions P127–H137 match the 'HIGH' region motif.

The protein belongs to the class-I aminoacyl-tRNA synthetase family. Monomer.

The protein resides in the cytoplasm. The catalysed reaction is tRNA(Arg) + L-arginine + ATP = L-arginyl-tRNA(Arg) + AMP + diphosphate. This is Arginine--tRNA ligase from Pseudomonas paraeruginosa (strain DSM 24068 / PA7) (Pseudomonas aeruginosa (strain PA7)).